Consider the following 824-residue polypeptide: Putative beta-glucuronidase (824 aa).

Residues 26-43 traverse the membrane as a helical segment; sequence YLKLVLVLYLIMVSWSGY. Catalysis depends on Glu-430, which acts as the Proton donor.

The protein belongs to the glycosyl hydrolase 2 family.

The protein resides in the membrane. It catalyses the reaction a beta-D-glucuronoside + H2O = D-glucuronate + an alcohol. Its function is as follows. Glycoside hydrolase that may be involved in ulvan degradation. Ulvan is the main polysaccharide component of the Ulvales (green seaweed) cell wall. It is composed of disaccharide building blocks comprising 3-sulfated rhamnose (Rha3S) linked to D-glucuronic acid (GlcA), L-iduronic acid (IduA), or D-xylose (Xyl). This Formosa agariphila (strain DSM 15362 / KCTC 12365 / LMG 23005 / KMM 3901 / M-2Alg 35-1) protein is Putative beta-glucuronidase.